The following is a 358-amino-acid chain: Peptide chain release factor 1 (358 aa).

Residue Q237 is modified to N5-methylglutamine.

It belongs to the prokaryotic/mitochondrial release factor family. Post-translationally, methylated by PrmC. Methylation increases the termination efficiency of RF1.

Its subcellular location is the cytoplasm. Its function is as follows. Peptide chain release factor 1 directs the termination of translation in response to the peptide chain termination codons UAG and UAA. The chain is Peptide chain release factor 1 from Streptomyces griseus subsp. griseus (strain JCM 4626 / CBS 651.72 / NBRC 13350 / KCC S-0626 / ISP 5235).